Here is a 105-residue protein sequence, read N- to C-terminus: Nucleoid-associated protein PTH_0052 (105 aa).

It belongs to the YbaB/EbfC family. As to quaternary structure, homodimer.

Its subcellular location is the cytoplasm. The protein resides in the nucleoid. Its function is as follows. Binds to DNA and alters its conformation. May be involved in regulation of gene expression, nucleoid organization and DNA protection. This Pelotomaculum thermopropionicum (strain DSM 13744 / JCM 10971 / SI) protein is Nucleoid-associated protein PTH_0052.